Consider the following 141-residue polypeptide: Nucleoside diphosphate kinase (141 aa).

Residues lysine 11, phenylalanine 59, arginine 87, threonine 93, arginine 104, and asparagine 114 each coordinate ATP. The Pros-phosphohistidine intermediate role is filled by histidine 117.

This sequence belongs to the NDK family. As to quaternary structure, homotetramer. Mg(2+) is required as a cofactor.

Its subcellular location is the cytoplasm. It carries out the reaction a 2'-deoxyribonucleoside 5'-diphosphate + ATP = a 2'-deoxyribonucleoside 5'-triphosphate + ADP. It catalyses the reaction a ribonucleoside 5'-diphosphate + ATP = a ribonucleoside 5'-triphosphate + ADP. Its function is as follows. Major role in the synthesis of nucleoside triphosphates other than ATP. The ATP gamma phosphate is transferred to the NDP beta phosphate via a ping-pong mechanism, using a phosphorylated active-site intermediate. The chain is Nucleoside diphosphate kinase from Bordetella bronchiseptica (strain ATCC BAA-588 / NCTC 13252 / RB50) (Alcaligenes bronchisepticus).